Consider the following 62-residue polypeptide: Small EDRK-rich factor 1 (62 aa).

2 stretches are compositionally biased toward basic and acidic residues: residues Met-1 to Ser-30 and Ile-50 to Lys-62. The tract at residues Met-1–Lys-62 is disordered.

This sequence belongs to the SERF family. As to quaternary structure, interacts with SNCA; this interaction promotes the aggregation of SNCA. As to expression, expressed in brain (at protein level). Highly expressed in the testis.

It is found in the cytoplasm. Its subcellular location is the cytosol. It localises to the nucleus. Positive regulator of amyloid protein aggregation and proteotoxicity. Induces conformational changes in amyloid proteins, such as APP, HTT, and SNCA, driving them into compact formations preceding the formation of aggregates. In Mus musculus (Mouse), this protein is Small EDRK-rich factor 1 (Serf1).